The primary structure comprises 308 residues: 1D-myo-inositol 2-acetamido-2-deoxy-alpha-D-glucopyranoside deacetylase (308 aa).

H37, D40, and H171 together coordinate Zn(2+).

This sequence belongs to the MshB deacetylase family. Zn(2+) serves as cofactor.

It catalyses the reaction 1D-myo-inositol 2-acetamido-2-deoxy-alpha-D-glucopyranoside + H2O = 1D-myo-inositol 2-amino-2-deoxy-alpha-D-glucopyranoside + acetate. Catalyzes the deacetylation of 1D-myo-inositol 2-acetamido-2-deoxy-alpha-D-glucopyranoside (GlcNAc-Ins) in the mycothiol biosynthesis pathway. The chain is 1D-myo-inositol 2-acetamido-2-deoxy-alpha-D-glucopyranoside deacetylase from Mycobacterium sp. (strain KMS).